Here is a 251-residue protein sequence, read N- to C-terminus: uncharacterized protein (251 aa).

Disordered stretches follow at residues 1 to 92 (MGRP…PGSA) and 137 to 251 (KPTP…LRTH). Positions 69 to 92 (AEGAPALLGGSPSSGSPGHPPGSA) are enriched in low complexity. Positions 155–172 (SESSWQLPQLPAGSTSGS) are enriched in polar residues.

This is an uncharacterized protein from Homo sapiens (Human).